A 178-amino-acid polypeptide reads, in one-letter code: Ribosome maturation factor RimP (178 aa).

This sequence belongs to the RimP family.

Its subcellular location is the cytoplasm. Required for maturation of 30S ribosomal subunits. The polypeptide is Ribosome maturation factor RimP (Mycolicibacterium paratuberculosis (strain ATCC BAA-968 / K-10) (Mycobacterium paratuberculosis)).